The sequence spans 256 residues: Ribonuclease T2 (256 aa).

Positions 1-24 (MRPAALRGALLGCLCLALLCLGGA) are cleaved as a signal peptide. Cysteine 48 and cysteine 55 are disulfide-bonded. Histidine 65 is an active-site residue. Intrachain disulfides connect cysteine 75/cysteine 121, cysteine 184/cysteine 241, and cysteine 202/cysteine 213. N-linked (GlcNAc...) asparagine glycosylation is found at asparagine 76 and asparagine 106. Catalysis depends on residues glutamate 114 and histidine 118. A glycan (N-linked (GlcNAc...) asparagine) is linked at asparagine 212.

It belongs to the RNase T2 family. As to expression, ubiquitous. Higher expression levels observed in the temporal lobe and fetal brain.

It is found in the secreted. Its subcellular location is the lysosome lumen. The protein resides in the endoplasmic reticulum lumen. It localises to the mitochondrion intermembrane space. It catalyses the reaction a ribonucleotidyl-ribonucleotide-RNA + H2O = a 3'-end 3'-phospho-ribonucleotide-RNA + a 5'-end dephospho-ribonucleoside-RNA + H(+). It carries out the reaction an adenylyl-uridine-RNA = a 3'-end 2',3'-cyclophospho-AMP-RNA + a 5'-end dephospho-uridine-RNA. The catalysed reaction is a guanylyl-uridine-RNA = a 3'-end 2',3'-cyclophospho-GMP-RNA + a 5'-end dephospho-uridine-RNA. With respect to regulation, inhibited by Zn(2+) and Cu(2+). Its function is as follows. Ribonuclease that plays an essential role in innate immune response by recognizing and degrading RNAs from microbial pathogens that are subsequently sensed by TLR8. Cleaves preferentially single-stranded RNA molecules between purine and uridine residues, which critically contributes to the supply of catabolic uridine and the generation of purine-2',3'-cyclophosphate-terminated oligoribonucleotides. In turn, RNase T2 degradation products promote the RNA-dependent activation of TLR8. In plasmacytoid dendritic cells, it cooperates with PLD3 or PLD4 5'-&gt;3' exonucleases to process RNA fragments and release 2',3'-cyclic guanosine monophosphate (2',3'-cGMP), a potent stimulatory ligand for TLR7. Also plays a key role in degradation of mitochondrial RNA and processing of non-coding RNA imported from the cytosol into mitochondria. Participates as well in degradation of mitochondrion-associated cytosolic rRNAs. This Homo sapiens (Human) protein is Ribonuclease T2 (RNASET2).